The sequence spans 68 residues: Conotoxin Em11.5 (68 aa).

The signal sequence occupies residues 1 to 26; that stretch reads MMFRLTSVGCFLLVIACLNLFQVVLT. Intrachain disulfides connect cysteine 29-cysteine 43, cysteine 36-cysteine 48, cysteine 42-cysteine 52, and cysteine 47-cysteine 56. Phenylalanine 60 is modified (phenylalanine amide). A propeptide spanning residues 64–68 is cleaved from the precursor; sequence ATFQE.

It belongs to the conotoxin I2 superfamily. Expressed by the venom duct.

It is found in the secreted. The sequence is that of Conotoxin Em11.5 from Conus emaciatus (False virgin cone).